The sequence spans 141 residues: Vasotocin-neurophysin VT (141 aa).

Cys-1 and Cys-6 are disulfide-bonded. Residue Gly-9 is modified to Glycine amide. Intrachain disulfides connect Cys-22-Cys-66, Cys-25-Cys-39, Cys-33-Cys-56, Cys-40-Cys-46, Cys-73-Cys-85, Cys-79-Cys-97, and Cys-86-Cys-91. Asn-117 carries an N-linked (GlcNAc...) asparagine glycan.

It belongs to the vasopressin/oxytocin family. Post-translationally, seven disulfide bonds are present in neurophysin.

The protein resides in the secreted. In terms of biological role, vasotocin is an antidiuretic hormone. This is Vasotocin-neurophysin VT from Pelophylax lessonae (Pool frog).